Here is a 214-residue protein sequence, read N- to C-terminus: Adenylate kinase (214 aa).

ATP is bound at residue 10 to 15 (GAGKGT). The tract at residues 30-59 (STGDMLRAAVKSGSELGKQAKDIMDAGKLV) is NMP. AMP-binding positions include Thr31, Arg36, 57 to 59 (KLV), 85 to 88 (GFPR), and Gln92. Residues 122–159 (GRRVHAPSGRVYHVKFNPPKVEGKDDVTGEELTTRKDD) form an LID region. ATP contacts are provided by residues Arg123 and 132–133 (VY). AMP-binding residues include Arg156 and Arg167. Lys192 carries the N6-acetyllysine modification. Lys200 contributes to the ATP binding site.

Belongs to the adenylate kinase family. Monomer.

The protein localises to the cytoplasm. It carries out the reaction AMP + ATP = 2 ADP. It functions in the pathway purine metabolism; AMP biosynthesis via salvage pathway; AMP from ADP: step 1/1. In terms of biological role, catalyzes the reversible transfer of the terminal phosphate group between ATP and AMP. Plays an important role in cellular energy homeostasis and in adenine nucleotide metabolism. The polypeptide is Adenylate kinase (Escherichia coli O8 (strain IAI1)).